The primary structure comprises 430 residues: Serine hydroxymethyltransferase 2 (430 aa).

(6S)-5,6,7,8-tetrahydrofolate contacts are provided by residues Leu-128 and 132–134 (GHL). Lys-237 carries the N6-(pyridoxal phosphate)lysine modification.

It belongs to the SHMT family. In terms of assembly, homodimer. It depends on pyridoxal 5'-phosphate as a cofactor.

Its subcellular location is the cytoplasm. The catalysed reaction is (6R)-5,10-methylene-5,6,7,8-tetrahydrofolate + glycine + H2O = (6S)-5,6,7,8-tetrahydrofolate + L-serine. The protein operates within one-carbon metabolism; tetrahydrofolate interconversion. It participates in amino-acid biosynthesis; glycine biosynthesis; glycine from L-serine: step 1/1. In terms of biological role, catalyzes the reversible interconversion of serine and glycine with tetrahydrofolate (THF) serving as the one-carbon carrier. This reaction serves as the major source of one-carbon groups required for the biosynthesis of purines, thymidylate, methionine, and other important biomolecules. Also exhibits THF-independent aldolase activity toward beta-hydroxyamino acids, producing glycine and aldehydes, via a retro-aldol mechanism. In Rhodospirillum rubrum (strain ATCC 11170 / ATH 1.1.1 / DSM 467 / LMG 4362 / NCIMB 8255 / S1), this protein is Serine hydroxymethyltransferase 2.